The following is a 398-amino-acid chain: Phosphoglycerate kinase (398 aa).

Substrate is bound by residues Asp-22–Asn-24, Arg-38, His-61–Arg-64, Arg-120, and Arg-153. ATP-binding positions include Lys-206, Gly-297, Glu-328, and Gly-354 to Thr-357.

This sequence belongs to the phosphoglycerate kinase family. As to quaternary structure, monomer.

The protein resides in the cytoplasm. It carries out the reaction (2R)-3-phosphoglycerate + ATP = (2R)-3-phospho-glyceroyl phosphate + ADP. It participates in carbohydrate degradation; glycolysis; pyruvate from D-glyceraldehyde 3-phosphate: step 2/5. The chain is Phosphoglycerate kinase from Nautilia profundicola (strain ATCC BAA-1463 / DSM 18972 / AmH).